A 202-amino-acid chain; its full sequence is Holliday junction branch migration complex subunit RuvA (202 aa).

A domain I region spans residues 1 to 64 (MIDYVSGTLV…EDDESLYGFA (64 aa)). Residues 65–143 (TKAERTVFET…DLDVLEDTSP (79 aa)) form a domain II region. Residues 144-149 (LSGGSD) are flexible linker. The interval 150–202 (ARAEARADALEALTELGLSKADAERSIRQVLRDNAGIQSADELVRRALKADQE) is domain III.

It belongs to the RuvA family. Homotetramer. Forms an RuvA(8)-RuvB(12)-Holliday junction (HJ) complex. HJ DNA is sandwiched between 2 RuvA tetramers; dsDNA enters through RuvA and exits via RuvB. An RuvB hexamer assembles on each DNA strand where it exits the tetramer. Each RuvB hexamer is contacted by two RuvA subunits (via domain III) on 2 adjacent RuvB subunits; this complex drives branch migration. In the full resolvosome a probable DNA-RuvA(4)-RuvB(12)-RuvC(2) complex forms which resolves the HJ.

Its subcellular location is the cytoplasm. Its function is as follows. The RuvA-RuvB-RuvC complex processes Holliday junction (HJ) DNA during genetic recombination and DNA repair, while the RuvA-RuvB complex plays an important role in the rescue of blocked DNA replication forks via replication fork reversal (RFR). RuvA specifically binds to HJ cruciform DNA, conferring on it an open structure. The RuvB hexamer acts as an ATP-dependent pump, pulling dsDNA into and through the RuvAB complex. HJ branch migration allows RuvC to scan DNA until it finds its consensus sequence, where it cleaves and resolves the cruciform DNA. The polypeptide is Holliday junction branch migration complex subunit RuvA (Salinibacter ruber (strain DSM 13855 / M31)).